We begin with the raw amino-acid sequence, 531 residues long: Efflux pump terG (531 aa).

Positions methionine 1–threonine 11 are enriched in polar residues. Positions methionine 1–glycine 27 are disordered. 13 helical membrane passes run glycine 86–glycine 106, alanine 117–valine 137, isoleucine 145–isoleucine 165, phenylalanine 179–leucine 199, tryptophan 207–isoleucine 227, isoleucine 249–asparagine 269, tyrosine 280–leucine 300, phenylalanine 319–isoleucine 339, isoleucine 351–valine 371, alanine 380–leucine 400, proline 402–methionine 422, serine 447–isoleucine 467, and threonine 488–leucine 508.

It belongs to the major facilitator superfamily.

It localises to the cell membrane. Efflux pump that might be required for efficient secretion of terrein or other secondary metabolies produced by the terrein genne cluster. This Aspergillus terreus (strain NIH 2624 / FGSC A1156) protein is Efflux pump terG.